The primary structure comprises 552 residues: Eukaryotic translation initiation factor 3 subunit D (552 aa).

Positions 288-302 (DFDLLTVSETANEPP) are RNA gate. The tract at residues 525 to 552 (LPDGTFSSDEDEEEDDEDEEDEEEDEDN) is disordered. Residues 532–552 (SDEDEEEDDEDEEDEEEDEDN) show a composition bias toward acidic residues.

Belongs to the eIF-3 subunit D family. In terms of assembly, component of the eukaryotic translation initiation factor 3 (eIF-3) complex, which is composed of 13 subunits: eif3a, eif3b, eif3c, eif3d, eif3e, eif3f, eif3g, eif3h, eif3i, eif3j, eif3k, eif3l and eif3m.

It is found in the cytoplasm. MRNA cap-binding component of the eukaryotic translation initiation factor 3 (eIF-3) complex, which is involved in protein synthesis of a specialized repertoire of mRNAs and, together with other initiation factors, stimulates binding of mRNA and methionyl-tRNAi to the 40S ribosome. The eIF-3 complex specifically targets and initiates translation of a subset of mRNAs involved in cell proliferation. In the eIF-3 complex, eif3d specifically recognizes and binds the 7-methylguanosine cap of a subset of mRNAs. The chain is Eukaryotic translation initiation factor 3 subunit D (eif3d) from Danio rerio (Zebrafish).